A 197-amino-acid chain; its full sequence is ATP-dependent Clp protease proteolytic subunit 2 (197 aa).

The active-site Nucleophile is S97. H122 is an active-site residue.

This sequence belongs to the peptidase S14 family. As to quaternary structure, fourteen ClpP subunits assemble into 2 heptameric rings which stack back to back to give a disk-like structure with a central cavity, resembling the structure of eukaryotic proteasomes.

Its subcellular location is the cytoplasm. It carries out the reaction Hydrolysis of proteins to small peptides in the presence of ATP and magnesium. alpha-casein is the usual test substrate. In the absence of ATP, only oligopeptides shorter than five residues are hydrolyzed (such as succinyl-Leu-Tyr-|-NHMec, and Leu-Tyr-Leu-|-Tyr-Trp, in which cleavage of the -Tyr-|-Leu- and -Tyr-|-Trp bonds also occurs).. Cleaves peptides in various proteins in a process that requires ATP hydrolysis. Has a chymotrypsin-like activity. Plays a major role in the degradation of misfolded proteins. This Leptospira interrogans serogroup Icterohaemorrhagiae serovar copenhageni (strain Fiocruz L1-130) protein is ATP-dependent Clp protease proteolytic subunit 2.